The chain runs to 594 residues: Sucrose transport protein SUC3 (594 aa).

Position 2 is an N-acetylserine (Ser2). Residues Ser2–Cys58 lie on the Cytoplasmic side of the membrane. Residues Val23–Asp50 are disordered. Residues Ser31–Ser46 show a composition bias toward low complexity. The helical transmembrane segment at Ser59–Leu79 threads the bilayer. Residues Gln80–Ser98 are Extracellular-facing. Residues Ser99 to Trp119 traverse the membrane as a helical segment. Residues Ser120–Arg131 lie on the Cytoplasmic side of the membrane. Residues Pro132 to Ala152 form a helical membrane-spanning segment. The Extracellular portion of the chain corresponds to Asp153 to Arg174. A helical transmembrane segment spans residues Ala175–Gly195. The Cytoplasmic portion of the chain corresponds to Pro196 to Asn214. A helical transmembrane segment spans residues Ala215 to Gly235. Topologically, residues Lys236 to Lys257 are extracellular. The chain crosses the membrane as a helical span at residues Ala258–Ala278. The Cytoplasmic portion of the chain corresponds to Lys279–Ala365. Residues Met366 to Phe386 traverse the membrane as a helical segment. The Extracellular segment spans residues Asp387–Gly417. A helical transmembrane segment spans residues Ala418–Met438. Topologically, residues Cys439–Arg445 are cytoplasmic. A helical transmembrane segment spans residues Val446–Ser466. Residues Leu467–Thr489 lie on the Extracellular side of the membrane. N-linked (GlcNAc...) asparagine glycosylation is present at Asn484. The chain crosses the membrane as a helical span at residues Ala490–Phe510. Topologically, residues Ser511–Gly525 are cytoplasmic. The chain crosses the membrane as a helical span at residues Leu526–Ala546. The Extracellular segment spans residues Gly547 to Gly555. A helical membrane pass occupies residues Gly556–Leu576. Residues Gln577–Gly594 are Cytoplasmic-facing.

The protein belongs to the glycoside-pentoside-hexuronide (GPH) cation symporter transporter (TC 2.A.2.4) family. In terms of assembly, homodimer. Interacts with SUC2 and SUC4. As to expression, mostly localized in parenchymatic cells next to vascular tissues (at protein level). Present in stipules, trichomes, hydathodes and guard cells of source leaves, as well as in lateral root tips and flowers.

The protein resides in the cell membrane. The catalysed reaction is sucrose(out) + H(+)(out) = sucrose(in) + H(+)(in). It functions in the pathway glycan biosynthesis; sucrose metabolism. Its activity is regulated as follows. Inhibited by protonophores (e.g. dinitrophenol and carbonyl cyanide m-chlorophenyl-hydrazone (CCCP)) and SH group inhibitors (e.g. p-chloromercuribenzene sulphonic acid (PCMBS)). Functionally, responsible for the transport of sucrose into the cell, with the concomitant uptake of protons (symport system). Can also transport maltose at a lesser rate. May also transport biotin. Probably involved in carpel maturation that leads to pod shatter and seed dispersal. In Arabidopsis thaliana (Mouse-ear cress), this protein is Sucrose transport protein SUC3.